The chain runs to 397 residues: Argininosuccinate synthase (397 aa).

ATP is bound at residue Ala8–Ser16. Positions 86 and 91 each coordinate L-citrulline. Residue Gly116 coordinates ATP. L-aspartate contacts are provided by Thr118, Asn122, and Asp123. Asn122 is an L-citrulline binding site. 5 residues coordinate L-citrulline: Arg126, Ser175, Ser184, Glu260, and Tyr272.

It belongs to the argininosuccinate synthase family. Type 1 subfamily. Homotetramer.

The protein localises to the cytoplasm. It carries out the reaction L-citrulline + L-aspartate + ATP = 2-(N(omega)-L-arginino)succinate + AMP + diphosphate + H(+). Its pathway is amino-acid biosynthesis; L-arginine biosynthesis; L-arginine from L-ornithine and carbamoyl phosphate: step 2/3. In Clostridium botulinum (strain ATCC 19397 / Type A), this protein is Argininosuccinate synthase.